The sequence spans 184 residues: Elongation factor P (184 aa).

Belongs to the elongation factor P family.

Its subcellular location is the cytoplasm. Its pathway is protein biosynthesis; polypeptide chain elongation. In terms of biological role, involved in peptide bond synthesis. Stimulates efficient translation and peptide-bond synthesis on native or reconstituted 70S ribosomes in vitro. Probably functions indirectly by altering the affinity of the ribosome for aminoacyl-tRNA, thus increasing their reactivity as acceptors for peptidyl transferase. The polypeptide is Elongation factor P (Delftia acidovorans (strain DSM 14801 / SPH-1)).